Reading from the N-terminus, the 301-residue chain is Phosphatidylglycerol--prolipoprotein diacylglyceryl transferase (301 aa).

A run of 3 helical transmembrane segments spans residues 17 to 37 (LAVRWYGLMYLVAFIAAIVVG), 59 to 79 (MLFYGVLGTILGGRLGYVLFY), and 97 to 117 (GGMSFHGGFLGVTLAMVLFAY). R142 serves as a coordination point for a 1,2-diacyl-sn-glycero-3-phospho-(1'-sn-glycerol). A run of 2 helical transmembrane segments spans residues 230–250 (MGAISAVFLIGYGLARFTVEF) and 265–285 (LSMGQWLSLPMILVGIGLLVW).

The protein belongs to the Lgt family.

Its subcellular location is the cell inner membrane. It carries out the reaction L-cysteinyl-[prolipoprotein] + a 1,2-diacyl-sn-glycero-3-phospho-(1'-sn-glycerol) = an S-1,2-diacyl-sn-glyceryl-L-cysteinyl-[prolipoprotein] + sn-glycerol 1-phosphate + H(+). It participates in protein modification; lipoprotein biosynthesis (diacylglyceryl transfer). Catalyzes the transfer of the diacylglyceryl group from phosphatidylglycerol to the sulfhydryl group of the N-terminal cysteine of a prolipoprotein, the first step in the formation of mature lipoproteins. This Paraburkholderia xenovorans (strain LB400) protein is Phosphatidylglycerol--prolipoprotein diacylglyceryl transferase.